We begin with the raw amino-acid sequence, 227 residues long: Ribose-5-phosphate isomerase A (227 aa).

Substrate-binding positions include 26-29 (TGST), 82-85 (DGAD), and 95-98 (KGGG). The Proton acceptor role is filled by Glu-104. Residue Lys-122 coordinates substrate.

Belongs to the ribose 5-phosphate isomerase family. As to quaternary structure, homodimer.

The enzyme catalyses aldehydo-D-ribose 5-phosphate = D-ribulose 5-phosphate. The protein operates within carbohydrate degradation; pentose phosphate pathway; D-ribose 5-phosphate from D-ribulose 5-phosphate (non-oxidative stage): step 1/1. In terms of biological role, catalyzes the reversible conversion of ribose-5-phosphate to ribulose 5-phosphate. The protein is Ribose-5-phosphate isomerase A of Streptococcus pyogenes serotype M5 (strain Manfredo).